We begin with the raw amino-acid sequence, 743 residues long: Phosphoribosylformylglycinamidine synthase subunit PurL (743 aa).

H50 is an active-site residue. ATP is bound by residues Y53 and K92. E94 is a Mg(2+) binding site. Substrate-binding positions include S95 to H98 and R117. The active-site Proton acceptor is H96. D118 is a binding site for Mg(2+). Q241 is a substrate binding site. D269 contributes to the Mg(2+) binding site. E313–Q315 contacts substrate. D494 and G531 together coordinate ATP. N532 lines the Mg(2+) pocket. S534 provides a ligand contact to substrate.

It belongs to the FGAMS family. Monomer. Part of the FGAM synthase complex composed of 1 PurL, 1 PurQ and 2 PurS subunits.

It localises to the cytoplasm. The enzyme catalyses N(2)-formyl-N(1)-(5-phospho-beta-D-ribosyl)glycinamide + L-glutamine + ATP + H2O = 2-formamido-N(1)-(5-O-phospho-beta-D-ribosyl)acetamidine + L-glutamate + ADP + phosphate + H(+). The protein operates within purine metabolism; IMP biosynthesis via de novo pathway; 5-amino-1-(5-phospho-D-ribosyl)imidazole from N(2)-formyl-N(1)-(5-phospho-D-ribosyl)glycinamide: step 1/2. In terms of biological role, part of the phosphoribosylformylglycinamidine synthase complex involved in the purines biosynthetic pathway. Catalyzes the ATP-dependent conversion of formylglycinamide ribonucleotide (FGAR) and glutamine to yield formylglycinamidine ribonucleotide (FGAM) and glutamate. The FGAM synthase complex is composed of three subunits. PurQ produces an ammonia molecule by converting glutamine to glutamate. PurL transfers the ammonia molecule to FGAR to form FGAM in an ATP-dependent manner. PurS interacts with PurQ and PurL and is thought to assist in the transfer of the ammonia molecule from PurQ to PurL. The polypeptide is Phosphoribosylformylglycinamidine synthase subunit PurL (Mesorhizobium japonicum (strain LMG 29417 / CECT 9101 / MAFF 303099) (Mesorhizobium loti (strain MAFF 303099))).